The sequence spans 257 residues: Nickel import system ATP-binding protein NikD (257 aa).

Residues 4-245 form the ABC transporter domain; it reads IDIQNLTIKN…HLHPYTERLI (242 aa). 37 to 44 contacts ATP; it reads GESGAGKS.

It belongs to the ABC transporter superfamily. As to quaternary structure, the complex is composed of two ATP-binding proteins (NikD and NikE), two transmembrane proteins (NikB and NikC) and a solute-binding protein (NikA).

It localises to the cell membrane. The catalysed reaction is Ni(2+)(out) + ATP + H2O = Ni(2+)(in) + ADP + phosphate + H(+). Its function is as follows. Part of the ABC transporter complex NikABCDE (Opp2) involved in nickel import. Probably responsible for energy coupling to the transport system. This is Nickel import system ATP-binding protein NikD from Staphylococcus aureus (strain MSSA476).